Reading from the N-terminus, the 467-residue chain is Probable Xaa-Pro aminopeptidase SMAC_04549 (467 aa).

Residues aspartate 263, aspartate 274, glutamate 397, and glutamate 437 each coordinate Mn(2+).

Belongs to the peptidase M24B family. Mn(2+) is required as a cofactor.

It carries out the reaction Release of any N-terminal amino acid, including proline, that is linked to proline, even from a dipeptide or tripeptide.. Catalyzes the removal of a penultimate prolyl residue from the N-termini of peptides. The chain is Probable Xaa-Pro aminopeptidase SMAC_04549 from Sordaria macrospora (strain ATCC MYA-333 / DSM 997 / K(L3346) / K-hell).